The chain runs to 180 residues: Inner membrane-spanning protein YciB (180 aa).

Transmembrane regions (helical) follow at residues 22–42 (IFVA…FTWL), 50–70 (MTLV…AFHS), 72–92 (LFIK…LLVS), 121–141 (LSWA…AFWL), and 149–169 (FKVF…GVYI).

Belongs to the YciB family.

It is found in the cell inner membrane. In terms of biological role, plays a role in cell envelope biogenesis, maintenance of cell envelope integrity and membrane homeostasis. The polypeptide is Inner membrane-spanning protein YciB (Yersinia pseudotuberculosis serotype O:1b (strain IP 31758)).